We begin with the raw amino-acid sequence, 108 residues long: Large ribosomal subunit protein uL24 (108 aa).

It belongs to the universal ribosomal protein uL24 family. Part of the 50S ribosomal subunit.

Functionally, one of two assembly initiator proteins, it binds directly to the 5'-end of the 23S rRNA, where it nucleates assembly of the 50S subunit. Its function is as follows. One of the proteins that surrounds the polypeptide exit tunnel on the outside of the subunit. This chain is Large ribosomal subunit protein uL24, found in Desulfosudis oleivorans (strain DSM 6200 / JCM 39069 / Hxd3) (Desulfococcus oleovorans).